The following is a 300-amino-acid chain: Small ribosomal subunit protein uS2 (300 aa).

The disordered stretch occupies residues 278 to 300 (GEAQTGNEGWGTEAAAPAATTQW).

It belongs to the universal ribosomal protein uS2 family. Component of the small ribosomal subunit. Mature ribosomes consist of a small (40S) and a large (60S) subunit. The 40S subunit contains about 33 different proteins and 1 molecule of RNA (18S). The 60S subunit contains about 49 different proteins and 3 molecules of RNA (25S, 5.8S and 5S). Interacts with rps21.

It localises to the cytoplasm. Its function is as follows. Required for the assembly and/or stability of the 40S ribosomal subunit. Required for the processing of the 20S rRNA-precursor to mature 18S rRNA in a late step of the maturation of 40S ribosomal subunits. This Pyrenophora tritici-repentis (strain Pt-1C-BFP) (Wheat tan spot fungus) protein is Small ribosomal subunit protein uS2 (rps0).